The primary structure comprises 100 residues: Osteocalcin (100 aa).

The signal sequence occupies residues 1-23 (MRTPMLLALLALATLCLAGRADA). Residues 24-51 (KPGDAESGKGAAFVSKQEGSEVVKRLRR) constitute a propeptide that is removed on maturation. Residues 52–98 (YLDHWLGAPAPYPDPLEPKREVCELNPDCDELADHIGFQEAYRRFYG) form the Gla domain. A 4-hydroxyproline modification is found at Pro-60. Ca(2+)-binding residues include Glu-68, Glu-72, Glu-75, and Asp-81. 3 positions are modified to 4-carboxyglutamate: Glu-68, Glu-72, and Glu-75. Cys-74 and Cys-80 are disulfide-bonded.

It belongs to the osteocalcin/matrix Gla protein family. Gamma-carboxyglutamate residues are formed by vitamin K dependent carboxylation by GGCX. These residues are essential for the binding of calcium. Decarboxylation promotes the hormone activity.

The protein localises to the secreted. In terms of biological role, the carboxylated form is one of the main organic components of the bone matrix, which constitutes 1-2% of the total bone protein. It acts as a negative regulator of bone formation and is required to limit bone formation without impairing bone resorption or mineralization. The carboxylated form binds strongly to apatite and calcium. The uncarboxylated form acts as a hormone secreted by osteoblasts, which regulates different cellular processes, such as energy metabolism, male fertility and brain development. Regulates of energy metabolism by acting as a hormone favoring pancreatic beta-cell proliferation, insulin secretion and sensitivity and energy expenditure. Uncarboxylated osteocalcin hormone also promotes testosterone production in the testes: acts as a ligand for G protein-coupled receptor GPRC6A at the surface of Leydig cells, initiating a signaling response that promotes the expression of enzymes required for testosterone synthesis in a CREB-dependent manner. Also acts as a regulator of brain development: osteocalcin hormone crosses the blood-brain barrier and acts as a ligand for GPR158 on neurons, initiating a signaling response that prevents neuronal apoptosis in the hippocampus, favors the synthesis of all monoamine neurotransmitters and inhibits that of gamma-aminobutyric acid (GABA). Osteocalcin also crosses the placenta during pregnancy and maternal osteocalcin is required for fetal brain development. This chain is Osteocalcin (BGLAP), found in Bos taurus (Bovine).